A 404-amino-acid chain; its full sequence is Pectate lyase E (404 aa).

The N-terminal stretch at 1–41 is a signal peptide; the sequence is MNNSRMSSVSTQKTTGRSALGTKSALAAIIATTMMVSVASA. Residues D182 and D225 each contribute to the Ca(2+) site. Residue R278 is part of the active site.

The protein belongs to the polysaccharide lyase 1 family. PLBC subfamily. Requires Ca(2+) as cofactor.

It is found in the secreted. The enzyme catalyses Eliminative cleavage of (1-&gt;4)-alpha-D-galacturonan to give oligosaccharides with 4-deoxy-alpha-D-galact-4-enuronosyl groups at their non-reducing ends.. Its pathway is glycan metabolism; pectin degradation; 2-dehydro-3-deoxy-D-gluconate from pectin: step 2/5. Involved in maceration and soft-rotting of plant tissue. Pectate lyases have been implicated as pathogenicity factors which induce maceration or rotting of plant tissue. PelE is sufficient to induce these effects under laboratory conditions. This Dickeya chrysanthemi (Pectobacterium chrysanthemi) protein is Pectate lyase E (pelE).